The following is a 1104-amino-acid chain: Valine--tRNA ligase, mitochondrial (1104 aa).

Residues 1-47 (MNKWLNTLSKTFTFRLLNCHYRRSLPLCQNFSLKKSLTHNQVRFFKM) constitute a mitochondrion transit peptide. Position 73 is a phosphoserine (serine 73). Residues 99–119 (KKNAAATTGASQKKPKKKKEV) form a disordered region. The short motif at 190–200 (PNVTGALHIGH) is the 'HIGH' region element. Serine 294 and serine 332 each carry phosphoserine. A 'KMSKS' region motif is present at residues 703–707 (KMSKS). Lysine 706 is an ATP binding site. Serine 707 carries the phosphoserine modification. Threonine 1003 is modified (phosphothreonine).

The protein belongs to the class-I aminoacyl-tRNA synthetase family.

It localises to the cytoplasm. The protein resides in the mitochondrion. It carries out the reaction tRNA(Val) + L-valine + ATP = L-valyl-tRNA(Val) + AMP + diphosphate. The protein is Valine--tRNA ligase, mitochondrial (VAS1) of Saccharomyces cerevisiae (strain ATCC 204508 / S288c) (Baker's yeast).